Consider the following 20-residue polypeptide: Thylakoid lumenal 18.4 kDa protein (20 aa).

The protein localises to the plastid. It localises to the chloroplast thylakoid lumen. This chain is Thylakoid lumenal 18.4 kDa protein, found in Spinacia oleracea (Spinach).